The chain runs to 969 residues: Aspartic protease 5 (969 aa).

Positions 1 to 22 (MEAGAMGGSSFLSFSSGPSAET) are cleaved as a signal peptide. Positions 1 to 45 (MEAGAMGGSSFLSFSSGPSAETSPSSLSPPTSSSPSPSPQLVSDS) are enriched in low complexity. Disordered regions lie at residues 1–65 (MEAG…SSRT), 79–104 (ENEA…AGHL), 128–149 (SSAT…RSSS), 173–193 (SSSS…SACG), and 311–382 (FLSL…DLPR). Topologically, residues 23 to 820 (SPSSLSPPTS…PEGLPLSPQQ (798 aa)) are lumenal. Residues 311 to 324 (FLSLSSSPRSLASD) show a composition bias toward low complexity. The segment covering 335–355 (QSREQRGEREGERQRPDKGEE) has biased composition (basic and acidic residues). A Peptidase A1 domain is found at 413-758 (YFLDILVGTP…DREQDRVGFA (346 aa)). Asp431 is an active-site residue. The tract at residues 608-635 (PPESESTPATEALRPVAGESASRRISEK) is disordered. Asp682 is a catalytic residue. Residues 768-794 (DQRPRGPDSGDGPKGRPTAPFTVPPLR) form a disordered region. The segment covering 769 to 781 (QRPRGPDSGDGPK) has biased composition (basic and acidic residues). Residues 821–841 (LWVAAALVVVAILIAVTVILL) traverse the membrane as a helical segment. Residues 842 to 969 (HTIKRPSRSS…TLLDLPLGGE (128 aa)) are Cytoplasmic-facing. The interval 922 to 969 (EDDGDFFGDDSVPSAEEQETAPSLSLREESSPFSASQSTLLDLPLGGE) is disordered. Residues 952–961 (SPFSASQSTL) show a composition bias toward polar residues.

This sequence belongs to the peptidase A1 family. Post-translationally, may be auto-cleaved to produce a 55 kDa form.

It is found in the golgi apparatus membrane. Functionally, in tachyzoites, plays an essential role in the export of several dense granule proteins into the host cell by cleaving the localization motif RRLxx (termed Toxoplasma export element (TEXEL)) located downstream of the N-terminal secretory signal sequence. However, can also regulate the export of proteins that lack the TEXEL motif, such as GRA24. Requires Arg at P3 and P2, and Leu at P1 in the substrate TEXEL motif and, specifically, cleaves after Leu. Cleaves GRA16; proteolytic cleavage is essential for the correct trafficking of GRA16 from the parasite into the infected host nucleus. Cleaves GRA19 and GRA20. Cleaves MYR1. Cleaves LCAT, GRA44, GRA46, GRA46, ROP35/WNG1 and ROP34/WNG2. By regulating the export of dense granule proteins into the host cell, regulates multiple processes during tachyzoite infection of host cells, including recruitment of host mitochondria to the parasitophorous vacuole (PV), formation of the nanotubular network (NTN) or intravacuolar network (IVN) which are membranous tubules that bud from the PV membrane into the vacuolar lumen and, up-regulation of host cell genes to facilitate the parasite infection and modulate the host innate immune response. At the bradyzoite stage, also involved in the formation of the cyst wall. In Toxoplasma gondii, this protein is Aspartic protease 5.